The following is a 249-amino-acid chain: Glutathione S-transferase tcpG (249 aa).

The GST N-terminal domain maps to 20 to 109; the sequence is LYVRKAIPAP…YLCDKHDKDG (90 aa). Residues 115–249 form the GST C-terminal domain; it reads NATERAQVTS…TEEEIELHGR (135 aa).

Belongs to the GST superfamily.

It carries out the reaction RX + glutathione = an S-substituted glutathione + a halide anion + H(+). Its pathway is secondary metabolite biosynthesis. In terms of biological role, glutathione S-transferase; part of the gene cluster that mediates the biosynthesis of an unusual class of epipolythiodioxopiperazines (ETPs) lacking the reactive thiol group important for toxicity. Firstly, L-tyrosine is prenylated by tcpD, before undergoing condensation with L-glycine in a reaction catalyzed by the NRPS tcpP leading to the diketopiperazine (DKP) backbone. Afterwards the alpha-carbon of tyrosine is oxidized by the cytochrome P450 tcpC to form a hydroxyl group. However, in contrast other ETP biosynthesis pathways studied so far, tcpC is not able to bishydroxylate the DKP at both alpha-carbon positions, but hydroxylates the alpha-carbon of the tyrosine part and the nitrogen of the glycine part. The next steps involve an alpha,beta-elimination reaction catalyzed by tcpI, a methylation by the methyltransferase tcpN the action of the four enzyme cascade tcpG/K/J/I. Due to a dysfunctional cytochrome P450 monooxygenase tcpC, the pathway leads to the biosynthesis of probable non-toxic metabolites lacking the reactive thiol group. The sequence is that of Glutathione S-transferase tcpG from Claviceps purpurea (strain 20.1) (Ergot fungus).